We begin with the raw amino-acid sequence, 532 residues long: uncharacterized protein (532 aa).

Helical transmembrane passes span 7 to 26 (HSSY…LGRI), 30 to 52 (GLSL…GVII), 59 to 77 (FGLV…PGFF), 87 to 109 (LILI…KYAF), 116 to 134 (VVGL…AVAI), and 139 to 161 (SPLA…ILFV). 2 consecutive RCK C-terminal domains span residues 179 to 262 (LEIE…LIGE) and 263 to 346 (REEG…LLGN). Transmembrane regions (helical) follow at residues 356 to 376 (FFPI…NISF), 386 to 408 (LTGG…PIIW), 421 to 440 (LGLL…NLVA), 445 to 467 (SGLL…AVIV), 474 to 496 (INIL…LAAA), and 506 to 528 (SVAY…QVIS).

It belongs to the AAE transporter (TC 2.A.81) family.

The protein resides in the cell membrane. This is an uncharacterized protein from Bacteroides thetaiotaomicron (strain ATCC 29148 / DSM 2079 / JCM 5827 / CCUG 10774 / NCTC 10582 / VPI-5482 / E50).